The following is a 102-amino-acid chain: uncharacterized protein (102 aa).

This is an uncharacterized protein from Enterobacteria phage T4 (Bacteriophage T4).